Reading from the N-terminus, the 243-residue chain is Phosphoadenosine 5'-phosphosulfate reductase (243 aa).

Cys-239 acts as the Nucleophile; cysteine thiosulfonate intermediate in catalysis.

The protein belongs to the PAPS reductase family. CysH subfamily.

It localises to the cytoplasm. The enzyme catalyses [thioredoxin]-disulfide + sulfite + adenosine 3',5'-bisphosphate + 2 H(+) = [thioredoxin]-dithiol + 3'-phosphoadenylyl sulfate. Its pathway is sulfur metabolism; hydrogen sulfide biosynthesis; sulfite from sulfate: step 3/3. In terms of biological role, catalyzes the formation of sulfite from phosphoadenosine 5'-phosphosulfate (PAPS) using thioredoxin as an electron donor. This Erwinia tasmaniensis (strain DSM 17950 / CFBP 7177 / CIP 109463 / NCPPB 4357 / Et1/99) protein is Phosphoadenosine 5'-phosphosulfate reductase.